Reading from the N-terminus, the 63-residue chain is Large ribosomal subunit protein uL29 (63 aa).

The protein belongs to the universal ribosomal protein uL29 family.

This chain is Large ribosomal subunit protein uL29, found in Bdellovibrio bacteriovorus (strain ATCC 15356 / DSM 50701 / NCIMB 9529 / HD100).